Here is a 318-residue protein sequence, read N- to C-terminus: MSLNFLDFEQPIAELDAKIEELQLVNNGQELDLDIEDQISQLREKNKEQTKKIFSNLDAWQTARVARHPQRPYSLDYIPRIFTEFDELAGDRAYANDNAIVGGTARLDGKPVMIIGHQKGRSTAEKVKRNFGMPRPEGYRKALRLMEMAERFNMPIITFIDTPGAYPGVGAEERGQSEAIARNLKVMARLSVPIICTVIGEGGSGGALAIGVGDRVNMLQYATYSVISPEGCASILWKTAEKAPTAAAAMGITAQRIKELDLINSIVEEPLGGAHRDMDVMAAHLKQAIKKDLSELEGLSKDELIEQRYDRLMSFGYC.

The CoA carboxyltransferase C-terminal domain occupies 34–295 (DIEDQISQLR…KQAIKKDLSE (262 aa)).

This sequence belongs to the AccA family. Acetyl-CoA carboxylase is a heterohexamer composed of biotin carboxyl carrier protein (AccB), biotin carboxylase (AccC) and two subunits each of ACCase subunit alpha (AccA) and ACCase subunit beta (AccD).

Its subcellular location is the cytoplasm. The catalysed reaction is N(6)-carboxybiotinyl-L-lysyl-[protein] + acetyl-CoA = N(6)-biotinyl-L-lysyl-[protein] + malonyl-CoA. It participates in lipid metabolism; malonyl-CoA biosynthesis; malonyl-CoA from acetyl-CoA: step 1/1. Component of the acetyl coenzyme A carboxylase (ACC) complex. First, biotin carboxylase catalyzes the carboxylation of biotin on its carrier protein (BCCP) and then the CO(2) group is transferred by the carboxyltransferase to acetyl-CoA to form malonyl-CoA. This Colwellia psychrerythraea (strain 34H / ATCC BAA-681) (Vibrio psychroerythus) protein is Acetyl-coenzyme A carboxylase carboxyl transferase subunit alpha.